The following is a 252-amino-acid chain: Adenosylcobinamide-GDP ribazoletransferase (252 aa).

Helical transmembrane passes span L4 to E24, P38 to L58, I60 to L80, F113 to L133, I141 to I161, L190 to V210, and V232 to T252.

Belongs to the CobS family. Mg(2+) serves as cofactor.

Its subcellular location is the cell membrane. The catalysed reaction is alpha-ribazole + adenosylcob(III)inamide-GDP = adenosylcob(III)alamin + GMP + H(+). The enzyme catalyses alpha-ribazole 5'-phosphate + adenosylcob(III)inamide-GDP = adenosylcob(III)alamin 5'-phosphate + GMP + H(+). Its pathway is cofactor biosynthesis; adenosylcobalamin biosynthesis; adenosylcobalamin from cob(II)yrinate a,c-diamide: step 7/7. Joins adenosylcobinamide-GDP and alpha-ribazole to generate adenosylcobalamin (Ado-cobalamin). Also synthesizes adenosylcobalamin 5'-phosphate from adenosylcobinamide-GDP and alpha-ribazole 5'-phosphate. The chain is Adenosylcobinamide-GDP ribazoletransferase from Clostridium botulinum (strain Eklund 17B / Type B).